An 875-amino-acid chain; its full sequence is Alanine--tRNA ligase (875 aa).

Positions 564, 568, 666, and 670 each coordinate Zn(2+).

Belongs to the class-II aminoacyl-tRNA synthetase family. As to quaternary structure, homotetramer. Zn(2+) serves as cofactor.

Its subcellular location is the cytoplasm. It catalyses the reaction tRNA(Ala) + L-alanine + ATP = L-alanyl-tRNA(Ala) + AMP + diphosphate. Catalyzes the attachment of alanine to tRNA(Ala) in a two-step reaction: alanine is first activated by ATP to form Ala-AMP and then transferred to the acceptor end of tRNA(Ala). Also edits incorrectly charged Ser-tRNA(Ala) and Gly-tRNA(Ala) via its editing domain. The sequence is that of Alanine--tRNA ligase from Citrobacter koseri (strain ATCC BAA-895 / CDC 4225-83 / SGSC4696).